The following is a 436-amino-acid chain: Phosphomethylpyrimidine synthase (436 aa).

Substrate contacts are provided by residues Asn-69, Met-98, Tyr-127, His-163, 185–187 (SRG), 226–229 (DACR), and Glu-265. His-269 provides a ligand contact to Zn(2+). Tyr-292 contacts substrate. Position 333 (His-333) interacts with Zn(2+). [4Fe-4S] cluster-binding residues include Cys-409, Cys-412, and Cys-416.

The protein belongs to the ThiC family. [4Fe-4S] cluster serves as cofactor.

The enzyme catalyses 5-amino-1-(5-phospho-beta-D-ribosyl)imidazole + S-adenosyl-L-methionine = 4-amino-2-methyl-5-(phosphooxymethyl)pyrimidine + CO + 5'-deoxyadenosine + formate + L-methionine + 3 H(+). It participates in cofactor biosynthesis; thiamine diphosphate biosynthesis. Catalyzes the synthesis of the hydroxymethylpyrimidine phosphate (HMP-P) moiety of thiamine from aminoimidazole ribotide (AIR) in a radical S-adenosyl-L-methionine (SAM)-dependent reaction. The sequence is that of Phosphomethylpyrimidine synthase from Clostridium perfringens (strain SM101 / Type A).